A 435-amino-acid chain; its full sequence is tRNA(Ile)-lysidine synthase (435 aa).

23-28 (SGGMDS) contacts ATP.

It belongs to the tRNA(Ile)-lysidine synthase family.

Its subcellular location is the cytoplasm. The catalysed reaction is cytidine(34) in tRNA(Ile2) + L-lysine + ATP = lysidine(34) in tRNA(Ile2) + AMP + diphosphate + H(+). In terms of biological role, ligates lysine onto the cytidine present at position 34 of the AUA codon-specific tRNA(Ile) that contains the anticodon CAU, in an ATP-dependent manner. Cytidine is converted to lysidine, thus changing the amino acid specificity of the tRNA from methionine to isoleucine. This is tRNA(Ile)-lysidine synthase from Xanthomonas campestris pv. campestris (strain 8004).